The sequence spans 452 residues: Sesamin methylene transferase (452 aa).

It belongs to the GcvT family. Homotrimer.

It carries out the reaction (+)-sesamin + (6S)-5,6,7,8-tetrahydrofolyl-(gamma-L-Glu)(n) = (+)-sesamin monocatechol + (6R)-5,10-methylenetetrahydrofolyl-(gamma-L-Glu)(n). The enzyme catalyses (+)-sesamin monocatechol + (6S)-5,6,7,8-tetrahydrofolyl-(gamma-L-Glu)(n) = (+)-sesamin dicatechol + (6R)-5,10-methylenetetrahydrofolyl-(gamma-L-Glu)(n). Functionally, converts sesamin into sesamin mono- and di-catechol. Catalyzes a ring cleavage to transfer the methylene group to tetrahydrofolate (THF). Also active with (+)-episesamin, (-)-asarinin, sesaminol, (+)-sesamolin and piperine. This is Sesamin methylene transferase from Sinomonas sp. (strain No.22).